Consider the following 95-residue polypeptide: MPKLEMMLVVLLIFPLFYFDAAGGQAVQGDRRGDGLARYLQRGDRNDESECIISTPGSSWGRCCLTRMCGTMCCPRSGCYCVYHWRRGHGCACSD.

Positions 1–24 (MPKLEMMLVVLLIFPLFYFDAAGG) are cleaved as a signal peptide. Residues 25–45 (QAVQGDRRGDGLARYLQRGDR) constitute a propeptide that is removed on maturation. 4-carboxyglutamate is present on Glu50. Pro56 bears the 4-hydroxyproline mark. 4 disulfides stabilise this stretch: Cys64/Cys73, Cys69/Cys81, Cys74/Cys91, and Cys79/Cys93.

The protein belongs to the conotoxin D superfamily. As to quaternary structure, hetero-, homo- or pseudo-homodimer (identical sequence, different post-translational modifications). As to expression, expressed by the venom duct.

The protein resides in the secreted. Functionally, alpha-conotoxins act on postsynaptic membranes, they bind to the nicotinic acetylcholine receptors (nAChR) and thus inhibit them. Through its two C-terminal domains, this homodimeric protein would bind to two nAChR allosteric sites, located outside the nAChR C-loop of the principal binding face and at the adjacent binding interface in a clockwise direction. This toxin specifically blocks mammalian neuronal nAChR of the alpha-7/CHRNA7, alpha-3-beta-2/CHRNA3-CHRNB2 and alpha-4-beta-2/CHRNA4-CHRNB2 subtypes. The polypeptide is Alpha-conotoxin-like Cp20.4 (Conus capitaneus (Captain cone)).